A 376-amino-acid chain; its full sequence is Probable low-specificity L-threonine aldolase (376 aa).

A compositionally biased stretch (polar residues) spans M1–S21. Positions M1–A22 are disordered. K226 carries the post-translational modification N6-(pyridoxal phosphate)lysine.

This sequence belongs to the threonine aldolase family. As to quaternary structure, homotetramer. Requires pyridoxal 5'-phosphate as cofactor.

The catalysed reaction is L-threonine = acetaldehyde + glycine. The enzyme catalyses L-allo-threonine = acetaldehyde + glycine. It functions in the pathway amino-acid degradation; L-threonine degradation via aldolase pathway; acetaldehyde and glycine from L-threonine: step 1/1. The sequence is that of Probable low-specificity L-threonine aldolase (gly1) from Schizosaccharomyces pombe (strain 972 / ATCC 24843) (Fission yeast).